A 94-amino-acid polypeptide reads, in one-letter code: MDRSLQVYICMYPYLDGSKQYRFDELISFYRPCPKSLDNIKSHYRQIHHQIRRRTHQHHQIRRRTHQHHHRSNCSRQRQCLVRHSCGRQMRVLA.

2 consecutive repeats follow at residues 48–57 and 58–67; these read HHQIRRRTHQ.

Functionally, involved in ammonia regulation of the GAP1 permease. The protein is Ammonia regulation of amino acid uptake protein (AUA1) of Saccharomyces cerevisiae (strain ATCC 204508 / S288c) (Baker's yeast).